A 457-amino-acid polypeptide reads, in one-letter code: tRNA modification GTPase MnmE (457 aa).

Residues Arg25, Glu87, and Arg126 each contribute to the (6S)-5-formyl-5,6,7,8-tetrahydrofolate site. One can recognise a TrmE-type G domain in the interval 223–377 (GISTAIIGRP…IEERINNLFF (155 aa)). Asn233 contacts K(+). GTP-binding positions include 233-238 (NVGKSS), 252-258 (TDIAGTT), and 277-280 (DTAG). Ser237 is a Mg(2+) binding site. Thr252, Ile254, and Thr257 together coordinate K(+). Residue Thr258 coordinates Mg(2+). Lys457 is a (6S)-5-formyl-5,6,7,8-tetrahydrofolate binding site.

Belongs to the TRAFAC class TrmE-Era-EngA-EngB-Septin-like GTPase superfamily. TrmE GTPase family. As to quaternary structure, homodimer. Heterotetramer of two MnmE and two MnmG subunits. Requires K(+) as cofactor.

It is found in the cytoplasm. Functionally, exhibits a very high intrinsic GTPase hydrolysis rate. Involved in the addition of a carboxymethylaminomethyl (cmnm) group at the wobble position (U34) of certain tRNAs, forming tRNA-cmnm(5)s(2)U34. The protein is tRNA modification GTPase MnmE of Streptococcus pneumoniae (strain Hungary19A-6).